The following is a 679-amino-acid chain: Glycine--tRNA ligase beta subunit (679 aa).

Belongs to the class-II aminoacyl-tRNA synthetase family. As to quaternary structure, tetramer of two alpha and two beta subunits.

The protein resides in the cytoplasm. It carries out the reaction tRNA(Gly) + glycine + ATP = glycyl-tRNA(Gly) + AMP + diphosphate. This chain is Glycine--tRNA ligase beta subunit, found in Thermodesulfovibrio yellowstonii (strain ATCC 51303 / DSM 11347 / YP87).